The sequence spans 257 residues: Glucanase inhibitor protein 1 (257 aa).

Residues Met-1–Leu-28 form the signal peptide. Residues Val-29–Lys-256 form the Peptidase S1 domain. An intrachain disulfide couples Cys-56 to Cys-72. N-linked (GlcNAc...) asparagine glycans are attached at residues Asn-107 and Asn-180. Intrachain disulfides connect Cys-181/Cys-191 and Cys-201/Cys-232. An N-linked (GlcNAc...) asparagine glycan is attached at Asn-213.

Belongs to the peptidase S1 family. As to quaternary structure, interacts with host endoglucanases EGaseA.

It localises to the secreted. Functionally, secreted effector that suppresses host plant glucan elicitor-mediated defense responses. Targets host endoglucanase EGaseA and inhibits the EGaseA-mediated release of elicitor-active glucan oligosaccharides from P.sojae cell walls. The chain is Glucanase inhibitor protein 1 from Phytophthora sojae (Soybean stem and root rot agent).